The sequence spans 599 residues: DNA primase (599 aa).

Residues 38–62 form a CHC2-type zinc finger; sequence CPFHQEKTPSFTVSDSKRFFYCFGC. One can recognise a Toprim domain in the interval 250–332; sequence NYSILVEGYF…EKKISFIRLP (83 aa). Mg(2+)-binding residues include E256, D300, and D302.

This sequence belongs to the DnaG primase family. Monomer. Interacts with DnaB. It depends on Zn(2+) as a cofactor. Mg(2+) is required as a cofactor.

The enzyme catalyses ssDNA + n NTP = ssDNA/pppN(pN)n-1 hybrid + (n-1) diphosphate.. In terms of biological role, RNA polymerase that catalyzes the synthesis of short RNA molecules used as primers for DNA polymerase during DNA replication. This chain is DNA primase, found in Rickettsia bellii (strain RML369-C).